A 332-amino-acid chain; its full sequence is Melanocortin receptor 4 (332 aa).

The Extracellular portion of the chain corresponds to 1–43; sequence MVNSTHRGMHASLHLWNRSSHRLHSNASESLGKGYSDGGCYEQ. Asn-3, Asn-17, and Asn-26 each carry an N-linked (GlcNAc...) asparagine glycan. Intrachain disulfides connect Cys-40–Cys-279 and Cys-271–Cys-277. Residues 44 to 69 form a helical membrane-spanning segment; that stretch reads LFVSPEVFVTLGVISLLENILVIVAI. Residues 70 to 81 lie on the Cytoplasmic side of the membrane; sequence AKNKNLHSPMYF. A helical membrane pass occupies residues 82 to 106; sequence FICSLAVADMLVSVSNGSETIVITL. The Ca(2+) site is built by Glu-100, Asp-122, and Asp-126. Over 107–123 the chain is Extracellular; sequence LNSTDTDTQSFTVNIDN. The helical transmembrane segment at 124-145 threads the bilayer; the sequence is VIDSVICSSLLASICSLLSIAV. Over 146 to 165 the chain is Cytoplasmic; it reads DRYFTIFYALQYHNIMTVKR. The chain crosses the membrane as a helical span at residues 166 to 186; that stretch reads VRIIISCIWAACTVSGILFII. The Extracellular portion of the chain corresponds to 187–191; it reads YSDSS. A helical transmembrane segment spans residues 192–215; the sequence is AVIICLITMFFTMLALMASLYVHM. Residues 216–248 are Cytoplasmic-facing; it reads FLMARLHIKRIAVLPGTGAIRQGANMKGAITLT. The helical transmembrane segment at 249–271 threads the bilayer; that stretch reads ILIGVFVVCWAPFFLHLIFYISC. Over 272-280 the chain is Extracellular; that stretch reads PQNPYCVCF. A helical transmembrane segment spans residues 281–304; sequence MSHFNLYLILIMCNSVIDPLIYAL. The Cytoplasmic portion of the chain corresponds to 305–332; sequence RSQELRKTFKEIICCYPLGGLCDLSSRY. Cys-318 is lipidated: S-palmitoyl cysteine.

Belongs to the G-protein coupled receptor 1 family. Homodimer; disulfide-linked, also forms higher order oligomers. Interacts with GNAS. Interacts with ATRNL1. Interacts with MGRN1; this interaction competes with GNAS-binding and thus inhibits agonist-induced cAMP production. Interacts with MRAP and MRAP2; these associated factors increase ligand-sensitivity and generation of cAMP.

It localises to the cell membrane. In terms of biological role, hormone receptor that acts as a key component of the leptin-melanocortin pathway at the intersection of homeostatic maintenance of energetic state. Plays a role in regulating food intake: activation by a stimulating hormone such as anorexigenic alpha-melanocyte stimulating hormone (alpha-MSH) inhibits appetite, whereas binding to a natural antagonist like Agouti-related protein/AGRP promotes appetite. G-protein-coupled receptor that activates conventional Galphas signaling leading to induction of anorexogenic signaling in the hypothalamus to result in negative energy balance. Regulates the firing activity of neurons from the hypothalamus by alpha-MSH and AGRP independently of Galphas signaling by ligand-induced coupling of closure of inwardly rectifying potassium channel KCNJ13. In intestinal epithelial cells, plays a role in the inhibition of hepatic glucose production via nesfatin-1/NUCB2 leading to increased cyclic adenosine monophosphate (cAMP) levels and glucagon-like peptide 1 (GLP-1) secretion in the intestinal epithelium. This chain is Melanocortin receptor 4 (MC4R), found in Macaca fascicularis (Crab-eating macaque).